The sequence spans 41 residues: Large ribosomal subunit protein bL36 (41 aa).

Belongs to the bacterial ribosomal protein bL36 family.

The chain is Large ribosomal subunit protein bL36 from Rickettsia africae (strain ESF-5).